The sequence spans 270 residues: Glutamate racemase (270 aa).

Substrate-binding positions include 7-8 and 39-40; these read DS and YG. Residue cysteine 70 is the Proton donor/acceptor of the active site. 71–72 provides a ligand contact to substrate; it reads NT. Cysteine 194 functions as the Proton donor/acceptor in the catalytic mechanism. Residue 195 to 196 participates in substrate binding; sequence TH.

It belongs to the aspartate/glutamate racemases family.

The enzyme catalyses L-glutamate = D-glutamate. The protein operates within cell wall biogenesis; peptidoglycan biosynthesis. In terms of biological role, provides the (R)-glutamate required for cell wall biosynthesis. This Cereibacter sphaeroides (strain ATCC 17025 / ATH 2.4.3) (Rhodobacter sphaeroides) protein is Glutamate racemase.